The primary structure comprises 276 residues: NADPH-dependent 7-cyano-7-deazaguanine reductase (276 aa).

Residue isoleucine 83–serine 85 coordinates substrate. Position 85-86 (serine 85–lysine 86) interacts with NADPH. Cysteine 184 acts as the Thioimide intermediate in catalysis. The active-site Proton donor is aspartate 191. Histidine 223 to glutamate 224 provides a ligand contact to substrate. Arginine 252–glycine 253 is a binding site for NADPH.

This sequence belongs to the GTP cyclohydrolase I family. QueF type 2 subfamily. In terms of assembly, homodimer.

It is found in the cytoplasm. The enzyme catalyses 7-aminomethyl-7-carbaguanine + 2 NADP(+) = 7-cyano-7-deazaguanine + 2 NADPH + 3 H(+). The protein operates within tRNA modification; tRNA-queuosine biosynthesis. In terms of biological role, catalyzes the NADPH-dependent reduction of 7-cyano-7-deazaguanine (preQ0) to 7-aminomethyl-7-deazaguanine (preQ1). This chain is NADPH-dependent 7-cyano-7-deazaguanine reductase, found in Pseudomonas savastanoi pv. phaseolicola (strain 1448A / Race 6) (Pseudomonas syringae pv. phaseolicola (strain 1448A / Race 6)).